A 296-amino-acid polypeptide reads, in one-letter code: Fructose-bisphosphate aldolase class 1 (296 aa).

The active-site Proton acceptor is Glu175. Lys212 acts as the Schiff-base intermediate with dihydroxyacetone-P in catalysis.

It belongs to the class I fructose-bisphosphate aldolase family.

It carries out the reaction beta-D-fructose 1,6-bisphosphate = D-glyceraldehyde 3-phosphate + dihydroxyacetone phosphate. It participates in carbohydrate degradation; glycolysis; D-glyceraldehyde 3-phosphate and glycerone phosphate from D-glucose: step 4/4. This chain is Fructose-bisphosphate aldolase class 1, found in Staphylococcus aureus (strain bovine RF122 / ET3-1).